Consider the following 319-residue polypeptide: Replication factor C small subunit 2 (319 aa).

Position 44-51 (44-51 (GPPGTGKT)) interacts with ATP.

It belongs to the activator 1 small subunits family. RfcS subfamily. As to quaternary structure, heteromultimer composed of small subunits (RfcS) and large subunits (RfcL).

Functionally, part of the RFC clamp loader complex which loads the PCNA sliding clamp onto DNA. In Pyrobaculum aerophilum (strain ATCC 51768 / DSM 7523 / JCM 9630 / CIP 104966 / NBRC 100827 / IM2), this protein is Replication factor C small subunit 2.